A 156-amino-acid polypeptide reads, in one-letter code: ATP synthase subunit b (156 aa).

A helical transmembrane segment spans residues 12 to 32 (VAFLIFVLFCMKYVWPPVITA).

This sequence belongs to the ATPase B chain family. F-type ATPases have 2 components, F(1) - the catalytic core - and F(0) - the membrane proton channel. F(1) has five subunits: alpha(3), beta(3), gamma(1), delta(1), epsilon(1). F(0) has three main subunits: a(1), b(2) and c(10-14). The alpha and beta chains form an alternating ring which encloses part of the gamma chain. F(1) is attached to F(0) by a central stalk formed by the gamma and epsilon chains, while a peripheral stalk is formed by the delta and b chains.

It is found in the cell inner membrane. Functionally, f(1)F(0) ATP synthase produces ATP from ADP in the presence of a proton or sodium gradient. F-type ATPases consist of two structural domains, F(1) containing the extramembraneous catalytic core and F(0) containing the membrane proton channel, linked together by a central stalk and a peripheral stalk. During catalysis, ATP synthesis in the catalytic domain of F(1) is coupled via a rotary mechanism of the central stalk subunits to proton translocation. Its function is as follows. Component of the F(0) channel, it forms part of the peripheral stalk, linking F(1) to F(0). The chain is ATP synthase subunit b from Pseudomonas putida (strain ATCC 700007 / DSM 6899 / JCM 31910 / BCRC 17059 / LMG 24140 / F1).